The following is a 126-amino-acid chain: 13 kDa ribonucleoprotein-associated protein (126 aa).

The protein belongs to the eukaryotic ribosomal protein eL8 family. Component of the U3 snoRNP particle. Binds to the C'/D and B/C motifs in U3 snoRNA. Component of the 25S U4/U6.U5 tri-snRNP particle, a subcomplex of the spliceosome. Binds to the 5' stem-loop of U4 snRNA.

Its subcellular location is the nucleus. The protein resides in the nucleolus. Functionally, common component of the spliceosome and rRNA processing machinery. In association with the spliceosomal U4/U6.U5 tri-snRNP particle, required for splicing of pre-mRNA. In association with box C/D snoRNPs, required for processing of pre-ribosomal RNA (rRNA) and site-specific 2'-O-methylation of substrate RNAs. Essential for the accumulation and stability of U4 snRNA, U6 snRNA, and box C/D snoRNAs. This chain is 13 kDa ribonucleoprotein-associated protein (SNU13), found in Debaryomyces hansenii (strain ATCC 36239 / CBS 767 / BCRC 21394 / JCM 1990 / NBRC 0083 / IGC 2968) (Yeast).